The following is a 128-amino-acid chain: Fluoride-specific ion channel FluC (128 aa).

Transmembrane regions (helical) follow at residues 5–25, 32–52, 70–90, and 106–126; these read ALVALGSAIGGTLRYWLSMVI, TFPWATLVINVAGSAAIGLFA, FFMVGICGGFTTFSSFSLQTL, and VGSVALCLLAVWLGHVAATII. Residues Gly77 and Thr80 each contribute to the Na(+) site.

Belongs to the fluoride channel Fluc/FEX (TC 1.A.43) family.

It is found in the cell inner membrane. The enzyme catalyses fluoride(in) = fluoride(out). With respect to regulation, na(+) is not transported, but it plays an essential structural role and its presence is essential for fluoride channel function. Fluoride-specific ion channel. Important for reducing fluoride concentration in the cell, thus reducing its toxicity. In Paramagnetospirillum magneticum (strain ATCC 700264 / AMB-1) (Magnetospirillum magneticum), this protein is Fluoride-specific ion channel FluC.